Reading from the N-terminus, the 250-residue chain is Ubiquinone/menaquinone biosynthesis C-methyltransferase UbiE (250 aa).

S-adenosyl-L-methionine-binding positions include Thr-73, Asp-94, and 122 to 123 (DA).

It belongs to the class I-like SAM-binding methyltransferase superfamily. MenG/UbiE family.

The catalysed reaction is a 2-demethylmenaquinol + S-adenosyl-L-methionine = a menaquinol + S-adenosyl-L-homocysteine + H(+). It carries out the reaction a 2-methoxy-6-(all-trans-polyprenyl)benzene-1,4-diol + S-adenosyl-L-methionine = a 5-methoxy-2-methyl-3-(all-trans-polyprenyl)benzene-1,4-diol + S-adenosyl-L-homocysteine + H(+). It participates in quinol/quinone metabolism; menaquinone biosynthesis; menaquinol from 1,4-dihydroxy-2-naphthoate: step 2/2. The protein operates within cofactor biosynthesis; ubiquinone biosynthesis. In terms of biological role, methyltransferase required for the conversion of demethylmenaquinol (DMKH2) to menaquinol (MKH2) and the conversion of 2-polyprenyl-6-methoxy-1,4-benzoquinol (DDMQH2) to 2-polyprenyl-3-methyl-6-methoxy-1,4-benzoquinol (DMQH2). This is Ubiquinone/menaquinone biosynthesis C-methyltransferase UbiE from Coxiella burnetii (strain RSA 493 / Nine Mile phase I).